Here is a 64-residue protein sequence, read N- to C-terminus: Large ribosomal subunit protein bL35 (64 aa).

This sequence belongs to the bacterial ribosomal protein bL35 family.

This is Large ribosomal subunit protein bL35 from Vibrio parahaemolyticus serotype O3:K6 (strain RIMD 2210633).